Reading from the N-terminus, the 277-residue chain is Phycobilisome rod-core linker polypeptide CpcG1 (277 aa).

Residues 11–189 (RTLDQRVVSY…YWRNKEISLS (179 aa)) enclose the PBS-linker domain.

Belongs to the phycobilisome linker protein family. The phycobilisome is a hemidiscoidal structure that is composed of two distinct substructures: a core complex and a number of rods radiating from the core.

The protein resides in the cellular thylakoid membrane. Functionally, rod-core linker protein required for attachment of phycocyanin to allophycocyanin in cores of phycobilisomes. Linker polypeptides determine the state of aggregation and the location of the disk-shaped phycobiliprotein units within the phycobilisome and modulate their spectroscopic properties in order to mediate a directed and optimal energy transfer. The sequence is that of Phycobilisome rod-core linker polypeptide CpcG1 (cpcG1) from Thermosynechococcus vestitus (strain NIES-2133 / IAM M-273 / BP-1).